Consider the following 856-residue polypeptide: TPR repeat-containing protein TP_0123 (856 aa).

3 TPR repeats span residues 107–140 (YAAV…VADD), 523–556 (YRTF…AEQL), and 603–636 (TVSL…ALQY).

This Treponema pallidum (strain Nichols) protein is TPR repeat-containing protein TP_0123.